Consider the following 270-residue polypeptide: ATP synthase subunit a (270 aa).

The next 5 membrane-spanning stretches (helical) occupy residues 37–57 (NVHI…LWVF), 98–118 (VAPL…MDLI), 143–163 (DVNI…YYSI), 217–237 (VVFI…GALP), and 239–259 (AIFH…LTIV).

The protein belongs to the ATPase A chain family. F-type ATPases have 2 components, CF(1) - the catalytic core - and CF(0) - the membrane proton channel. CF(1) has five subunits: alpha(3), beta(3), gamma(1), delta(1), epsilon(1). CF(0) has three main subunits: a(1), b(2) and c(9-12). The alpha and beta chains form an alternating ring which encloses part of the gamma chain. CF(1) is attached to CF(0) by a central stalk formed by the gamma and epsilon chains, while a peripheral stalk is formed by the delta and b chains.

The protein localises to the cell inner membrane. Key component of the proton channel; it plays a direct role in the translocation of protons across the membrane. The sequence is that of ATP synthase subunit a from Aliivibrio salmonicida (strain LFI1238) (Vibrio salmonicida (strain LFI1238)).